The chain runs to 424 residues: UPF0229 protein Avin_46880 (424 aa).

The tract at residues 57 to 108 (RDIDEPVLHHGRGGKQTIVHPGNKEFTAGERIPRPSGGGGGGSGSGKASNSG) is disordered. Over residues 92–101 (SGGGGGGSGS) the composition is skewed to gly residues.

Belongs to the UPF0229 family.

The chain is UPF0229 protein Avin_46880 from Azotobacter vinelandii (strain DJ / ATCC BAA-1303).